Here is a 312-residue protein sequence, read N- to C-terminus: Glyoxylate/hydroxypyruvate reductase A (312 aa).

Residue arginine 227 is part of the active site. Catalysis depends on histidine 275, which acts as the Proton donor.

This sequence belongs to the D-isomer specific 2-hydroxyacid dehydrogenase family. GhrA subfamily.

It localises to the cytoplasm. It carries out the reaction glycolate + NADP(+) = glyoxylate + NADPH + H(+). The enzyme catalyses (R)-glycerate + NAD(+) = 3-hydroxypyruvate + NADH + H(+). The catalysed reaction is (R)-glycerate + NADP(+) = 3-hydroxypyruvate + NADPH + H(+). In terms of biological role, catalyzes the NADPH-dependent reduction of glyoxylate and hydroxypyruvate into glycolate and glycerate, respectively. The polypeptide is Glyoxylate/hydroxypyruvate reductase A (Salmonella dublin (strain CT_02021853)).